The primary structure comprises 139 residues: Ribosome-binding factor A (139 aa).

Belongs to the RbfA family. Monomer. Binds 30S ribosomal subunits, but not 50S ribosomal subunits or 70S ribosomes.

The protein resides in the cytoplasm. Its function is as follows. One of several proteins that assist in the late maturation steps of the functional core of the 30S ribosomal subunit. Associates with free 30S ribosomal subunits (but not with 30S subunits that are part of 70S ribosomes or polysomes). Required for efficient processing of 16S rRNA. May interact with the 5'-terminal helix region of 16S rRNA. The sequence is that of Ribosome-binding factor A from Methylobacterium sp. (strain 4-46).